The chain runs to 716 residues: Polyribonucleotide nucleotidyltransferase (716 aa).

Mg(2+) contacts are provided by aspartate 488 and aspartate 494. One can recognise a KH domain in the interval 555–614 (PKIETITIPTDKIREVIGTGGKVIREIVATTGAKVDINDEGTVKVSASDGAKIKAAIDWI). Positions 624–692 (GAIYDGKVVK…DRGKTKLSMK (69 aa)) constitute an S1 motif domain. Residues 695–716 (DQETGEDLSKKEAVSPEEAVNT) are disordered.

It belongs to the polyribonucleotide nucleotidyltransferase family. The cofactor is Mg(2+).

It is found in the cytoplasm. It carries out the reaction RNA(n+1) + phosphate = RNA(n) + a ribonucleoside 5'-diphosphate. Functionally, involved in mRNA degradation. Catalyzes the phosphorolysis of single-stranded polyribonucleotides processively in the 3'- to 5'-direction. The chain is Polyribonucleotide nucleotidyltransferase from Caulobacter sp. (strain K31).